A 785-amino-acid polypeptide reads, in one-letter code: Conidiophore development regulator abaA (785 aa).

A disordered region spans residues 1–22 (MAEWQTECMLPPTQPGFEGVGP). The TEA DNA-binding region spans 130–204 (GKDGEPVWSD…QVLDSFLKGD (75 aa)). Residues 213-232 (EQPADRSNGQPPSAGPRWRN) are disordered.

The protein belongs to the TEC1 family.

The protein resides in the nucleus. BrlA, abaA and wetA are pivotal regulators of conidiophore development and conidium maturation. They act individually and together to regulate their own expression and that of numerous other sporulation-specific genes. Binds to the sequence 5'-CATTCY-3', where Y is a pyrimidine, making both major- and minor-groove contacts. Controls expression of wetA. This chain is Conidiophore development regulator abaA, found in Aspergillus oryzae (strain ATCC 42149 / RIB 40) (Yellow koji mold).